A 268-amino-acid chain; its full sequence is tRNA (guanine-N(1)-)-methyltransferase (268 aa).

S-adenosyl-L-methionine-binding positions include glycine 113 and 133 to 138 (IGDYVL). The interval 238-268 (RCPPDPFAHQGPVYEGDQLERPEGGEQGASR) is disordered.

Belongs to the RNA methyltransferase TrmD family. As to quaternary structure, homodimer.

Its subcellular location is the cytoplasm. The enzyme catalyses guanosine(37) in tRNA + S-adenosyl-L-methionine = N(1)-methylguanosine(37) in tRNA + S-adenosyl-L-homocysteine + H(+). In terms of biological role, specifically methylates guanosine-37 in various tRNAs. This chain is tRNA (guanine-N(1)-)-methyltransferase, found in Thermomicrobium roseum (strain ATCC 27502 / DSM 5159 / P-2).